Reading from the N-terminus, the 342-residue chain is MRSIKTVHVISAHAEGEVGDVIVGGVKPPPGETIWEQSRFIARDETLRNFVLNEPRGGVFRHVNLLVPPKHPDADAAFIIMEPEDTPPMSGSNSICVSTVLLDGGIVPMQEPETHMLLEAPGGLVKVRAECRNGKAERIFVQNLPSFAAKLDAELEVEGLGKLKVDTAYGGDSFVIVDAEAMGFSLKPEEAHEIARLGVRITNAANKALGFDHPENPDWRHFSFCLFAGKVERTAEGLRAGAAVAIQPGKVDRSPTGTALSARMAVLHARGEMKEGETLTAVSLIGSTFTGRILGTTTVGDRPAILPEISGRGWITGIHQHMLDPSDPWPEGYRLTDTWGAR.

Catalysis depends on Ser-90, which acts as the Proton acceptor. Substrate contacts are provided by residues 91–92 (GS), Asp-252, and 257–258 (GT).

It belongs to the proline racemase family.

The enzyme catalyses trans-3-hydroxy-L-proline = 1-pyrroline-2-carboxylate + H2O. It catalyses the reaction trans-4-hydroxy-L-proline = cis-4-hydroxy-D-proline. In terms of biological role, catalyzes the dehydration of trans-3-hydroxy-L-proline (t3LHyp) to Delta(1)-pyrroline-2-carboxylate (Pyr2C). Can also catalyze the epimerization of trans-4-hydroxy-L-proline (t4LHyp) to cis-4-hydroxy-D-proline (c4DHyp), albeit with 30-fold lower efficiency. Is likely involved in both degradation pathways that convert t3LHyp to L-proline and t4LHyp to alpha-ketoglutarate, which would allow A.tumefaciens to grow on t3LHyp or t4LHyp as a sole carbon source. Displays no proline racemase activity. In Agrobacterium fabrum (strain C58 / ATCC 33970) (Agrobacterium tumefaciens (strain C58)), this protein is Trans-3-hydroxy-L-proline dehydratase.